The primary structure comprises 1225 residues: Clustered mitochondria protein homolog (1225 aa).

Residues 1 to 22 are disordered; the sequence is MAQTNGEMEHSKESPEQITNGN. One can recognise a Clu domain in the interval 281 to 532; the sequence is QESNNQKDLL…RVTPLDVAWN (252 aa). Disordered regions lie at residues 577-605 and 846-878; these read EEAAKKEKSSEDTESKEEGSEEKSEEALD and ANGVNGTGQDEGSKKKKKNKNGDSGSPARSAAA. 3 TPR repeats span residues 949–982, 991–1024, and 1033–1066; these read AKLYHQLSMLYYQTDEKDAAVELARKAVIVTERT, ILSYLNLSLFEHASGNTKVALAYIKHAMDLWKII, and ITTMNNAAVMLQHLKQYSDSRKWFEASLSVCESL. Polar residues predominate over residues 1153-1184; sequence RTTLGTQIQPQVGQSTADVSAPSQASNSSIDS. Positions 1153-1225 are disordered; sequence RTTLGTQIQP…KLRGSKKSSA (73 aa).

The protein belongs to the CLU family. As to quaternary structure, may associate with the eukaryotic translation initiation factor 3 (eIF-3) complex.

The protein resides in the cytoplasm. Functionally, mRNA-binding protein involved in proper cytoplasmic distribution of mitochondria. This chain is Clustered mitochondria protein homolog, found in Emericella nidulans (strain FGSC A4 / ATCC 38163 / CBS 112.46 / NRRL 194 / M139) (Aspergillus nidulans).